We begin with the raw amino-acid sequence, 173 residues long: RNA pyrophosphohydrolase (173 aa).

In terms of domain architecture, Nudix hydrolase spans 11 to 164 (PYRKCVGIVV…KKHVYMKVVS (154 aa)). The short motif at 52 to 73 (GGIDEDEKPLDAAYRELYEETG) is the Nudix box element.

Belongs to the Nudix hydrolase family. RppH subfamily. It depends on a divalent metal cation as a cofactor.

Its function is as follows. Accelerates the degradation of transcripts by removing pyrophosphate from the 5'-end of triphosphorylated RNA, leading to a more labile monophosphorylated state that can stimulate subsequent ribonuclease cleavage. This Bartonella tribocorum (strain CIP 105476 / IBS 506) protein is RNA pyrophosphohydrolase.